A 531-amino-acid polypeptide reads, in one-letter code: Bifunctional protein TrpGD (531 aa).

One can recognise a Glutamine amidotransferase type-1 domain in the interval 3 to 196 (DILLLDNIDS…LAWAQQKLEP (194 aa)). 57–59 (GPG) contributes to the L-glutamine binding site. Cys-84 functions as the Nucleophile; for GATase activity in the catalytic mechanism. L-glutamine-binding positions include Gln-88 and 134–135 (SL). Catalysis depends on for GATase activity residues His-170 and Glu-172. The interval 202-531 (PILEKLYQAQ…DRVTALAARG (330 aa)) is anthranilate phosphoribosyltransferase.

In the C-terminal section; belongs to the anthranilate phosphoribosyltransferase family. In terms of assembly, monomer. Heterotetramer consisting of two non-identical subunits: a beta subunit (TrpG) and a large alpha subunit (TrpE).

The catalysed reaction is chorismate + L-glutamine = anthranilate + pyruvate + L-glutamate + H(+). It carries out the reaction N-(5-phospho-beta-D-ribosyl)anthranilate + diphosphate = 5-phospho-alpha-D-ribose 1-diphosphate + anthranilate. Its pathway is amino-acid biosynthesis; L-tryptophan biosynthesis; L-tryptophan from chorismate: step 1/5. The protein operates within amino-acid biosynthesis; L-tryptophan biosynthesis; L-tryptophan from chorismate: step 2/5. Cooperatively feedback inhibited by tryptophan. Part of a heterotetrameric complex that catalyzes the two-step biosynthesis of anthranilate, an intermediate in the biosynthesis of L-tryptophan. In the first step, the glutamine-binding beta subunit (TrpG) of anthranilate synthase (AS) provides the glutamine amidotransferase activity which generates ammonia as a substrate that, along with chorismate, is used in the second step, catalyzed by the large alpha subunit of AS (TrpE) to produce anthranilate. In the absence of TrpG, TrpE can synthesize anthranilate directly from chorismate and high concentrations of ammonia. In addition to synthesizing anthranilate, it also catalyzes the second step of the pathway, the transfer of the phosphoribosyl group of 5-phosphorylribose-1-pyrophosphate (PRPP) to anthranilate. The sequence is that of Bifunctional protein TrpGD (trpGD) from Salmonella typhimurium (strain LT2 / SGSC1412 / ATCC 700720).